A 103-amino-acid chain; its full sequence is Large ribosomal subunit protein bL21 (103 aa).

This sequence belongs to the bacterial ribosomal protein bL21 family. Part of the 50S ribosomal subunit. Contacts protein L20.

This protein binds to 23S rRNA in the presence of protein L20. The sequence is that of Large ribosomal subunit protein bL21 from Pseudomonas syringae pv. syringae (strain B728a).